The following is a 78-amino-acid chain: MSRVCQVTGKRPVVGNNRSHAMNATKRRFLPNLHTHRFWVESENRFVTLRLTAKGMRIIDKKGIDAVLAEIRARGEKI.

It belongs to the bacterial ribosomal protein bL28 family.

This chain is Large ribosomal subunit protein bL28, found in Glaesserella parasuis serovar 5 (strain SH0165) (Haemophilus parasuis).